We begin with the raw amino-acid sequence, 470 residues long: Flotillin-like protein 1 (470 aa).

Residue C35 is the site of S-palmitoyl cysteine attachment. A coiled-coil region spans residues 305 to 354 (EYETKVQEANWELYNKQKQAEAVLYEKQKQAEAQKAQADAAFYSKQKEAE).

It belongs to the band 7/mec-2 family. Flotillin subfamily. May be palmitoylated.

The protein localises to the cell membrane. It localises to the membrane. It is found in the caveola. Its function is as follows. May act as a scaffolding protein within caveolar membranes, functionally participating in formation of caveolae or caveolae-like vesicles. In Arabidopsis thaliana (Mouse-ear cress), this protein is Flotillin-like protein 1 (FLOT1).